Consider the following 115-residue polypeptide: Tyrosine-protein phosphatase 18 (115 aa).

Positions 1-115 (WLMIVEQKCR…ETGSDAPMVV (115 aa)) constitute a Tyrosine-protein phosphatase domain. Asp83 serves as a coordination point for substrate.

This sequence belongs to the protein-tyrosine phosphatase family.

It carries out the reaction O-phospho-L-tyrosyl-[protein] + H2O = L-tyrosyl-[protein] + phosphate. The sequence is that of Tyrosine-protein phosphatase 18 (STY-18) from Styela plicata (Wrinkled sea squirt).